Consider the following 299-residue polypeptide: Protoheme IX farnesyltransferase (299 aa).

9 helical membrane passes run 17-37 (VVAL…PAPY), 41-61 (GLLV…AAVF), 91-111 (ALMW…LFVN), 113-133 (ITMV…TLYL), 141-161 (IVIG…AVSG), 168-188 (ACLL…ALAI), 207-227 (GLAY…LVSL), 228-248 (LPYL…ALGI), and 266-286 (IAWC…VTLL).

The protein belongs to the UbiA prenyltransferase family. Protoheme IX farnesyltransferase subfamily.

Its subcellular location is the cell inner membrane. The enzyme catalyses heme b + (2E,6E)-farnesyl diphosphate + H2O = Fe(II)-heme o + diphosphate. Its pathway is porphyrin-containing compound metabolism; heme O biosynthesis; heme O from protoheme: step 1/1. Its function is as follows. Converts heme B (protoheme IX) to heme O by substitution of the vinyl group on carbon 2 of heme B porphyrin ring with a hydroxyethyl farnesyl side group. This Ruthia magnifica subsp. Calyptogena magnifica protein is Protoheme IX farnesyltransferase.